The sequence spans 156 residues: Ribosome maturation factor RimP (156 aa).

It belongs to the RimP family.

Its subcellular location is the cytoplasm. Functionally, required for maturation of 30S ribosomal subunits. In Lysinibacillus sphaericus (strain C3-41), this protein is Ribosome maturation factor RimP.